We begin with the raw amino-acid sequence, 260 residues long: Carbonic anhydrase (260 aa).

The tract at residues 1 to 31 is disordered; sequence MAHAWGYGPADGPESWAESFPIANGPRQSPI. In terms of domain architecture, Alpha-carbonic anhydrase spans 3–259; the sequence is HAWGYGPADG…LKGRKVRASF (257 aa). Residue His-64 is the Proton acceptor of the active site. Residues His-94, His-96, and His-119 each contribute to the Zn(2+) site. Tyr-127 is an active-site residue. 198-199 contributes to the substrate binding site; that stretch reads TT.

It belongs to the alpha-carbonic anhydrase family. It depends on Zn(2+) as a cofactor.

The catalysed reaction is hydrogencarbonate + H(+) = CO2 + H2O. In terms of biological role, reversible hydration of carbon dioxide. This is Carbonic anhydrase (cahz) from Danio rerio (Zebrafish).